The primary structure comprises 711 residues: Nucleolin (711 aa).

The disordered stretch occupies residues Met-1–Pro-304. Residues Lys-9, Lys-15, and Lys-16 each carry the N6-acetyllysine modification. Residues Val-24–Gly-43 show a composition bias toward acidic residues. Ser-28, Ser-34, Ser-41, and Ser-42 each carry phosphoserine. Residues Ala-56 to Pro-107 are compositionally biased toward low complexity. Repeat unit 1 spans residues Ala-58 to Val-65. Residues Ala-58–Lys-135 are 8 X 8 AA tandem repeats of X-T-P-X-K-K-X-X. Ser-67 bears the Phosphoserine mark. Thr-69, Thr-76, Thr-84, and Thr-92 each carry phosphothreonine. Tandem repeats lie at residues Ala-75–Ala-82, Val-83–Ala-90, and Ala-91–Val-98. N6-acetyllysine is present on Lys-96. Thr-99 carries the post-translational modification Phosphothreonine. Residues Thr-99–Val-104 form a 5; truncated repeat. Lys-102 bears the N6-acetyllysine mark. Copy 6 of the repeat occupies Ala-105–Ala-112. Thr-106 is subject to Phosphothreonine. Lys-109 bears the N6-acetyllysine mark. A Phosphothreonine modification is found at Thr-113. Lys-116 is modified (N6-acetyllysine). 2 tandem repeats follow at residues Ala-120 to Ala-127 and Ala-128 to Lys-135. Thr-121 is subject to Phosphothreonine. A compositionally biased stretch (low complexity) spans Pro-122–Gly-137. Lys-124 is subject to N6-acetyllysine. A phosphoserine mark is found at Ser-145, Ser-153, Ser-184, and Ser-207. Composition is skewed to acidic residues over residues Ser-145–Glu-171 and Ser-184–Met-212. Thr-215 is modified (phosphothreonine). Positions Glu-235–Pro-273 are enriched in acidic residues. The segment covering Val-274 to Gly-301 has biased composition (basic and acidic residues). Lys-298 is covalently cross-linked (Glycyl lysine isopeptide (Lys-Gly) (interchain with G-Cter in SUMO1); alternate). Lys-298 participates in a covalent cross-link: Glycyl lysine isopeptide (Lys-Gly) (interchain with G-Cter in SUMO2); alternate. Residue Thr-302 is modified to Phosphothreonine. RRM domains lie at Phe-308–Gly-384 and Arg-394–Glu-467. Position 319 is an N6-acetyllysine (Lys-319). Lys-325 participates in a covalent cross-link: Glycyl lysine isopeptide (Lys-Gly) (interchain with G-Cter in SUMO1); alternate. Lys-325 participates in a covalent cross-link: Glycyl lysine isopeptide (Lys-Gly) (interchain with G-Cter in SUMO2); alternate. Residue Lys-349 is modified to N6-acetyllysine. Ser-357 bears the Phosphoserine mark. Thr-368 carries the post-translational modification Phosphothreonine. Lys-371 is covalently cross-linked (Glycyl lysine isopeptide (Lys-Gly) (interchain with G-Cter in SUMO2)). A Glycyl lysine isopeptide (Lys-Gly) (interchain with G-Cter in SUMO2); alternate cross-link involves residue Lys-378. Lys-378 bears the N6-acetyllysine; alternate mark. Residues Lys-399 and Lys-404 each carry the N6-acetyllysine modification. The residue at position 406 (Thr-406) is a Phosphothreonine. N6-acetyllysine occurs at positions 428 and 445. Residues Ser-459 and Ser-461 each carry the phosphoserine modification. 2 positions are modified to N6-acetyllysine: Lys-468 and Lys-478. The 75-residue stretch at Lys-487 to Pro-561 folds into the RRM 3 domain. A Glycyl lysine isopeptide (Lys-Gly) (interchain with G-Cter in SUMO2); alternate cross-link involves residue Lys-514. At Lys-514 the chain carries N6-acetyllysine; alternate. At Lys-522 the chain carries N6-acetyllysine. A Phosphoserine modification is found at Ser-564. Lys-573 bears the N6-acetyllysine mark. In terms of domain architecture, RRM 4 spans Lys-573 to Pro-648. Lys-578 participates in a covalent cross-link: Glycyl lysine isopeptide (Lys-Gly) (interchain with G-Cter in SUMO2); alternate. An N6-acetyllysine; alternate modification is found at Lys-578. Phosphoserine is present on Ser-581. Lys-590 participates in a covalent cross-link: Glycyl lysine isopeptide (Lys-Gly) (interchain with G-Cter in SUMO1); alternate. Lys-590 is covalently cross-linked (Glycyl lysine isopeptide (Lys-Gly) (interchain with G-Cter in SUMO2); alternate). A phosphoserine mark is found at Ser-592 and Ser-620. Residue Lys-625 forms a Glycyl lysine isopeptide (Lys-Gly) (interchain with G-Cter in SUMO2) linkage. The disordered stretch occupies residues Val-641–Glu-711. Residue Lys-647 is modified to N6-acetyllysine. Over residues Glu-651–Gly-697 the composition is skewed to gly residues. Asymmetric dimethylarginine occurs at positions 657, 661, 667, 671, 674, 680, 682, 688, and 692. Arg-695 carries the post-translational modification Asymmetric dimethylarginine; alternate. An Omega-N-methylarginine; alternate modification is found at Arg-695. The segment covering Gly-698–Glu-711 has biased composition (basic and acidic residues).

As to quaternary structure, identified in a IGF2BP1-dependent mRNP granule complex containing untranslated mRNAs. Component of the SWAP complex that consists of NPM1, NCL/nucleolin, PARP1 and SWAP70. Component of a complex which is at least composed of HTATSF1/Tat-SF1, the P-TEFb complex components CDK9 and CCNT1, RNA polymerase II, SUPT5H, and NCL/nucleolin. Interacts with AICDA. Interacts with APTX. Interacts with C1QBP. Interacts with ERBB4. Interacts (via C-terminus) with FMR1 isoform 6 (via N-terminus). Interacts with GZF1; this interaction is important for nucleolar localization of GZF1. Interacts with NSUN2. Interacts with NVL. Interacts (via N-terminus domain) with SETX. Interacts (via RRM1 and C-terminal RRM4/Arg/Gly-rich domains) with TERT; the interaction is important for nucleolar localization of TERT. Interacts with WDR46. Interacts with ZFP36. Interacts with LRRC34. Interacts with RRP1B. Interacts with HNRNPU; this interaction occurs during mitosis. Interacts with RIOK1; RIOK1 recruits NCL to PRMT5 for symmetrically methylation. Interacts with ZBTB7B. Interacts with MDK; this interaction promotes NCL clustering and lateral movements of this complex into lipid rafts leading to MDK internalization. Interacts with HDGF. Interacts with ALKBH2. Interacts with IGFBP5; this interaction is necessary for IGFBP5 localization to the nucleus. Post-translationally, some glutamate residues are glycylated by TTLL8. This modification occurs exclusively on glutamate residues and results in a glycine chain on the gamma-carboxyl group. Symmetrically methylated by PRMT5.

It is found in the nucleus. The protein resides in the nucleolus. It localises to the cytoplasm. In terms of biological role, nucleolin is the major nucleolar protein of growing eukaryotic cells. It is found associated with intranucleolar chromatin and pre-ribosomal particles. It induces chromatin decondensation by binding to histone H1. It is thought to play a role in pre-rRNA transcription and ribosome assembly. May play a role in the process of transcriptional elongation. Binds RNA oligonucleotides with 5'-UUAGGG-3' repeats more tightly than the telomeric single-stranded DNA 5'-TTAGGG-3' repeats. The chain is Nucleolin (NCL) from Macaca fascicularis (Crab-eating macaque).